We begin with the raw amino-acid sequence, 483 residues long: Bifunctional pantoate ligase/cytidylate kinase (483 aa).

Residues 1-246 form a pantoate--beta-alanine ligase region; that stretch reads MPTMGALHAG…CGSTRLIDHA (246 aa). 4–11 is an ATP binding site; sequence MGALHAGH. Residue His-11 is the Proton donor of the active site. (R)-pantoate is bound at residue Gln-34. Residue Gln-34 participates in beta-alanine binding. An ATP-binding site is contributed by 124–127; it reads GEKD. Gln-130 is a (R)-pantoate binding site. ATP-binding positions include Val-153 and 161–164; that span reads LSSR. The cytidylate kinase stretch occupies residues 247–483; it reads FLMTRQPLVA…AEEAWPTPQR (237 aa).

The protein in the N-terminal section; belongs to the pantothenate synthetase family. This sequence in the C-terminal section; belongs to the cytidylate kinase family. Type 1 subfamily.

The protein resides in the cytoplasm. The enzyme catalyses (R)-pantoate + beta-alanine + ATP = (R)-pantothenate + AMP + diphosphate + H(+). It catalyses the reaction CMP + ATP = CDP + ADP. The catalysed reaction is dCMP + ATP = dCDP + ADP. It participates in cofactor biosynthesis; (R)-pantothenate biosynthesis; (R)-pantothenate from (R)-pantoate and beta-alanine: step 1/1. Catalyzes the condensation of pantoate with beta-alanine in an ATP-dependent reaction via a pantoyl-adenylate intermediate. Its function is as follows. Catalyzes the transfer of a phosphate group from ATP to either CMP or dCMP to form CDP or dCDP and ADP, respectively. The polypeptide is Bifunctional pantoate ligase/cytidylate kinase (Synechococcus sp. (strain CC9902)).